A 271-amino-acid chain; its full sequence is MYHLLIIITTLSFSSINITFAVDEAFPSIPTTFSVATKQHYDVKPIHHEVYDGERKIYDISHQYTPELPVWESSEGLGNFLRLAVSMKNGSDANISKMELSVHSGTHVDAPGHFHDHYYESGFDTDSLDLQILNGPALLVDVPRDKNISAEVMKSLHIPRGIRRVLFKTLNTDRRLMFKKEFDSSFVGFMVDGAKWLVENTDIKLVGLDYLSFAAYDEAPATHRFILERRDIIPVEALKLDDVEVGMYTLHCLPLRLVGAEGAPTRCILIK.

The signal sequence occupies residues 1-21 (MYHLLIIITTLSFSSINITFA).

Belongs to the Cyclase 1 superfamily.

It localises to the secreted. It is found in the extracellular space. The protein localises to the extracellular matrix. The chain is Cyclase-like protein 3 from Arabidopsis thaliana (Mouse-ear cress).